Reading from the N-terminus, the 241-residue chain is MAGHSKWNNIQGRKNAQDSKRSKVFQKLAREIFVAAKKGPDPNLNPSLRLVMDKAKAVNMPNDNIKRAIDKAAGNTSGENYDEVTYEGYAPGGIAVLVHALTDNKNRTSTNVRVAFNKNGGSLGETGSVSYMFDRKGYLVILREGLTVDEEEFMLEAIEAGADDVEVSDDVFEVFTEPGAFSDVKDALQQAGYTFATAELSMFPTVYNEIAENNQTQFDKMMEALEDDDDVQEVYTNAEIN.

A compositionally biased stretch (polar residues) spans 1 to 14 (MAGHSKWNNIQGRK). The disordered stretch occupies residues 1-22 (MAGHSKWNNIQGRKNAQDSKRS).

It belongs to the TACO1 family.

It is found in the cytoplasm. This Listeria innocua serovar 6a (strain ATCC BAA-680 / CLIP 11262) protein is Probable transcriptional regulatory protein lin1570.